A 475-amino-acid polypeptide reads, in one-letter code: ATP synthase subunit beta (475 aa).

161–168 serves as a coordination point for ATP; that stretch reads GGAGVGKT.

Belongs to the ATPase alpha/beta chains family. As to quaternary structure, F-type ATPases have 2 components, CF(1) - the catalytic core - and CF(0) - the membrane proton channel. CF(1) has five subunits: alpha(3), beta(3), gamma(1), delta(1), epsilon(1). CF(0) has three main subunits: a(1), b(2) and c(9-12). The alpha and beta chains form an alternating ring which encloses part of the gamma chain. CF(1) is attached to CF(0) by a central stalk formed by the gamma and epsilon chains, while a peripheral stalk is formed by the delta and b chains.

It is found in the cell membrane. The enzyme catalyses ATP + H2O + 4 H(+)(in) = ADP + phosphate + 5 H(+)(out). Produces ATP from ADP in the presence of a proton gradient across the membrane. The catalytic sites are hosted primarily by the beta subunits. This chain is ATP synthase subunit beta, found in Mycoplasma mycoides subsp. mycoides SC (strain CCUG 32753 / NCTC 10114 / PG1).